A 336-amino-acid polypeptide reads, in one-letter code: 4-hydroxythreonine-4-phosphate dehydrogenase (336 aa).

Residues His142 and Thr143 each contribute to the substrate site. 3 residues coordinate a divalent metal cation: His172, His217, and His274. 3 residues coordinate substrate: Lys282, Asn291, and Arg300.

This sequence belongs to the PdxA family. Homodimer. The cofactor is Zn(2+). It depends on Mg(2+) as a cofactor. Co(2+) is required as a cofactor.

The protein localises to the cytoplasm. The catalysed reaction is 4-(phosphooxy)-L-threonine + NAD(+) = 3-amino-2-oxopropyl phosphate + CO2 + NADH. Its pathway is cofactor biosynthesis; pyridoxine 5'-phosphate biosynthesis; pyridoxine 5'-phosphate from D-erythrose 4-phosphate: step 4/5. Functionally, catalyzes the NAD(P)-dependent oxidation of 4-(phosphooxy)-L-threonine (HTP) into 2-amino-3-oxo-4-(phosphooxy)butyric acid which spontaneously decarboxylates to form 3-amino-2-oxopropyl phosphate (AHAP). This is 4-hydroxythreonine-4-phosphate dehydrogenase from Trichlorobacter lovleyi (strain ATCC BAA-1151 / DSM 17278 / SZ) (Geobacter lovleyi).